The chain runs to 162 residues: Phospholipase A and acyltransferase 3 (162 aa).

Topologically, residues 1-133 (MRAPIPEPKP…VARSDQVRDV (133 aa)) are cytoplasmic. Residues 13–129 (LIEIFRPFYR…LRYGVARSDQ (117 aa)) form the LRAT domain. Catalysis depends on residues histidine 23 and histidine 35. The active-site Acyl-thioester intermediate is the cysteine 113. Residues 134–154 (IIAASAAGMGLAAMSLIGVMF) traverse the membrane as a helical segment. Topologically, residues 155 to 162 (SRNKRQKQ) are lumenal.

The protein belongs to the H-rev107 family. In terms of assembly, interacts with PPP2R1A; this interaction might decrease PP2A activity.

Its subcellular location is the cell membrane. The protein resides in the cytoplasm. It localises to the cytosol. The protein localises to the perinuclear region. It is found in the peroxisome membrane. Its subcellular location is the mitochondrion membrane. The protein resides in the nucleus envelope. It localises to the lysosome membrane. The protein localises to the endoplasmic reticulum membrane. The enzyme catalyses a 1,2-diacyl-sn-glycero-3-phosphocholine + H2O = a 1-acyl-sn-glycero-3-phosphocholine + a fatty acid + H(+). It carries out the reaction a 1,2-diacyl-sn-glycero-3-phosphocholine + H2O = a 2-acyl-sn-glycero-3-phosphocholine + a fatty acid + H(+). It catalyses the reaction 1,2-dihexadecanoyl-sn-glycero-3-phosphocholine + H2O = 1-hexadecanoyl-sn-glycero-3-phosphocholine + hexadecanoate + H(+). The catalysed reaction is 1,2-dihexadecanoyl-sn-glycero-3-phosphocholine + H2O = 2-hexadecanoyl-sn-glycero-3-phosphocholine + hexadecanoate + H(+). The enzyme catalyses 1-hexadecanoyl-2-(9Z-octadecenoyl)-sn-glycero-3-phosphocholine + H2O = 2-(9Z-octadecenoyl)-sn-glycero-3-phosphocholine + hexadecanoate + H(+). It carries out the reaction 1-hexadecanoyl-2-(9Z-octadecenoyl)-sn-glycero-3-phosphocholine + H2O = 1-hexadecanoyl-sn-glycero-3-phosphocholine + (9Z)-octadecenoate + H(+). It catalyses the reaction 1-hexadecanoyl-2-(5Z,8Z,11Z,14Z-eicosatetraenoyl)-sn-glycero-3-phosphocholine + H2O = 1-hexadecanoyl-sn-glycero-3-phosphocholine + (5Z,8Z,11Z,14Z)-eicosatetraenoate + H(+). The catalysed reaction is 1-hexadecanoyl-2-(5Z,8Z,11Z,14Z-eicosatetraenoyl)-sn-glycero-3-phosphocholine + H2O = 2-(5Z,8Z,11Z,14Z)-eicosatetraenoyl-sn-glycero-3-phosphocholine + hexadecanoate + H(+). The enzyme catalyses 1-hexadecanoyl-2-(9Z,12Z-octadecadienoyl)-sn-glycero-3-phosphoethanolamine + H2O = 1-hexadecanoyl-sn-glycero-3-phosphoethanolamine + (9Z,12Z)-octadecadienoate + H(+). It carries out the reaction 1-hexadecanoyl-2-(9Z,12Z-octadecadienoyl)-sn-glycero-3-phosphoethanolamine + H2O = 2-(9Z,12Z)-octadecadienoyl-sn-glycero-3-phosphoethanolamine + hexadecanoate + H(+). It catalyses the reaction 1-hexadecanoyl-2-(5Z,8Z,11Z,14Z-eicosatetraenoyl)-sn-glycero-3-phosphoethanolamine + H2O = 1-hexadecanoyl-sn-glycero-3-phosphoethanolamine + (5Z,8Z,11Z,14Z)-eicosatetraenoate + H(+). The catalysed reaction is 1-hexadecanoyl-2-(5Z,8Z,11Z,14Z-eicosatetraenoyl)-sn-glycero-3-phosphoethanolamine + H2O = 2-(5Z,8Z,11Z,14Z)-eicosatetraenoyl-sn-glycero-3-phosphoethanolamine + hexadecanoate + H(+). The enzyme catalyses 1-hexanoyl-2-acyl-sn-glycero-3-phosphocholine + H2O = hexanoate + a 2-acyl-sn-glycero-3-phosphocholine + H(+). It carries out the reaction 1-hexanoyl-2-acyl-sn-glycero-3-phosphocholine + H2O = 1-hexanoyl-sn-glycero-3-phosphocholine + a fatty acid + H(+). It catalyses the reaction 1,2-diheptadecanoyl-sn-glycero-3-phosphoethanolamine + 1-(9Z-octadecenoyl)-2-hexadecanoyl-sn-glycero-3-phosphocholine = 1,2-diheptadecanoyl-sn-glycero-3-phospho-N-hexadecanoyl-ethanolamine + 1-(9Z-octadecenoyl)-sn-glycero-3-phosphocholine + H(+). The catalysed reaction is 1,2-diheptadecanoyl-sn-glycero-3-phosphoethanolamine + 1-(9Z-octadecenoyl)-2-hexadecanoyl-sn-glycero-3-phosphocholine = 1,2-diheptadecanoyl-sn-glycero-3-phospho-N-(9Z-octadecenoyl)-ethanolamine + 2-hexadecanoyl-sn-glycero-3-phosphocholine + H(+). The enzyme catalyses 1,2-dihexanoyl-sn-glycero-3-phosphoethanolamine + 2-heptanoyl-sn-glycero-3-phosphocholine = hexanoyl-sn-glycero-3-phosphoethanolamine + 1-hexanoyl-2-heptanoyl-sn-glycero-3-phosphocholine. It carries out the reaction 1-hexadecanoyl-2-octadecanoyl-sn-glycero-3-phosphocholine + H2O = octadecanoate + 1-hexadecanoyl-sn-glycero-3-phosphocholine + H(+). It catalyses the reaction 1-hexadecanoyl-2-octadecanoyl-sn-glycero-3-phosphocholine + H2O = 2-octadecanoyl-sn-glycero-3-phosphocholine + hexadecanoate + H(+). The catalysed reaction is 1-octadecanoyl-2-hexadecanoyl-sn-glycero-3-phosphocholine + H2O = 1-octadecanoyl-sn-glycero-3-phosphocholine + hexadecanoate + H(+). The enzyme catalyses 1-octadecanoyl-2-hexadecanoyl-sn-glycero-3-phosphocholine + H2O = 2-hexadecanoyl-sn-glycero-3-phosphocholine + octadecanoate + H(+). It carries out the reaction 1-hexadecanoyl-2-(9Z,12Z-octadecadienoyl)-sn-glycero-3-phosphocholine + H2O = (9Z,12Z)-octadecadienoate + 1-hexadecanoyl-sn-glycero-3-phosphocholine + H(+). It catalyses the reaction 1-hexadecanoyl-2-(9Z,12Z-octadecadienoyl)-sn-glycero-3-phosphocholine + H2O = 2-(9Z,12Z-octadecadienoyl)-sn-glycero-3-phosphocholine + hexadecanoate + H(+). The catalysed reaction is 1,2-di-(9Z-octadecenoyl)-sn-glycero-3-phosphocholine + H2O = 2-(9Z-octadecenoyl)-sn-glycero-3-phosphocholine + (9Z)-octadecenoate + H(+). The enzyme catalyses 1,2-dihexadecanoyl-sn-glycero-3-phosphocholine + H2O = hexadecanoyl-sn-glycero-3-phosphocholine + hexadecanoate + H(+). It carries out the reaction 1,2-di-(9Z-octadecenoyl)-sn-glycero-3-phosphocholine + H2O = 1-(9Z-octadecenoyl)-sn-glycero-3-phosphocholine + (9Z)-octadecenoate + H(+). It catalyses the reaction 1,2-di-(9Z-octadecenoyl)-sn-glycero-3-phosphoethanolamine + 1,2-dihexadecanoyl-sn-glycero-3-phosphocholine = hexadecanoyl-sn-glycero-3-phosphocholine + N-hexadecanoyl-1,2-di-(9Z-octadecenoyl)-sn-glycero-3-phosphoethanolamine + H(+). The catalysed reaction is 1,2-di-(9Z,12Z-octadecadienoyl)-sn-glycero-3-phosphocholine + H2O = 1-(9Z,12Z)-octadecadienoyl-sn-glycero-3-phosphocholine + (9Z,12Z)-octadecadienoate + H(+). Exhibits both phospholipase A1/2 and acyltransferase activities. Shows phospholipase A1 (PLA1) and A2 (PLA2), catalyzing the calcium-independent release of fatty acids from the sn-1 or sn-2 position of glycerophospholipids. For most substrates, PLA1 activity is much higher than PLA2 activity. Shows O-acyltransferase activity, catalyzing the transfer of a fatty acyl group from glycerophospholipid to the hydroxyl group of lysophospholipid. Shows N-acyltransferase activity, catalyzing the calcium-independent transfer of a fatty acyl group at the sn-1 position of phosphatidylcholine (PC) and other glycerophospholipids to the primary amine of phosphatidylethanolamine (PE), forming N-acylphosphatidylethanolamine (NAPE), which serves as precursor for N-acylethanolamines (NAEs). Exhibits high N-acyltransferase activity and low phospholipase A1/2 activity. Required for complete organelle rupture and degradation that occur during eye lens terminal differentiation, when fiber cells that compose the lens degrade all membrane-bound organelles in order to provide lens with transparency to allow the passage of light. Organelle membrane degradation is probably catalyzed by the phospholipase activity. Plays a role in phospholipid metabolism and adipogenesis. This is Phospholipase A and acyltransferase 3 from Pongo abelii (Sumatran orangutan).